The sequence spans 84 residues: Metallothionein-like protein 2C (84 aa).

This sequence belongs to the metallothionein superfamily. Type 15 family.

Its subcellular location is the cytoplasm. It localises to the cytosol. In terms of biological role, metallothioneins have a high content of cysteine residues that bind various heavy metals. Acts as a reactive oxygen species (ROS) scavenger in the cytosol. Possesses superoxide anion and hydroxyl radical scavenging activities in vitro. Plays a role during root development, lateral root initiation and seed embryo germination, possibly by regulating levels of cytokinin. This is Metallothionein-like protein 2C (MT2C) from Oryza sativa subsp. indica (Rice).